The sequence spans 156 residues: 6,7-dimethyl-8-ribityllumazine synthase (156 aa).

Residues tryptophan 33, 64–66 (SVE), and 86–88 (VIL) each bind 5-amino-6-(D-ribitylamino)uracil. 91 to 92 (ET) is a (2S)-2-hydroxy-3-oxobutyl phosphate binding site. Histidine 94 serves as the catalytic Proton donor. Isoleucine 119 is a 5-amino-6-(D-ribitylamino)uracil binding site. Residue arginine 133 coordinates (2S)-2-hydroxy-3-oxobutyl phosphate.

The protein belongs to the DMRL synthase family.

It catalyses the reaction (2S)-2-hydroxy-3-oxobutyl phosphate + 5-amino-6-(D-ribitylamino)uracil = 6,7-dimethyl-8-(1-D-ribityl)lumazine + phosphate + 2 H2O + H(+). It functions in the pathway cofactor biosynthesis; riboflavin biosynthesis; riboflavin from 2-hydroxy-3-oxobutyl phosphate and 5-amino-6-(D-ribitylamino)uracil: step 1/2. Catalyzes the formation of 6,7-dimethyl-8-ribityllumazine by condensation of 5-amino-6-(D-ribitylamino)uracil with 3,4-dihydroxy-2-butanone 4-phosphate. This is the penultimate step in the biosynthesis of riboflavin. This chain is 6,7-dimethyl-8-ribityllumazine synthase, found in Tropheryma whipplei (strain TW08/27) (Whipple's bacillus).